The following is a 314-amino-acid chain: tRNA dimethylallyltransferase (314 aa).

14–21 lines the ATP pocket; it reads GPTASGKT. Residue 16 to 21 coordinates substrate; it reads TASGKT. Interaction with substrate tRNA regions lie at residues 39–42, 163–167, and 245–250; these read DSAQ, QRLQR, and RCVGYR.

The protein belongs to the IPP transferase family. Monomer. It depends on Mg(2+) as a cofactor.

It catalyses the reaction adenosine(37) in tRNA + dimethylallyl diphosphate = N(6)-dimethylallyladenosine(37) in tRNA + diphosphate. Functionally, catalyzes the transfer of a dimethylallyl group onto the adenine at position 37 in tRNAs that read codons beginning with uridine, leading to the formation of N6-(dimethylallyl)adenosine (i(6)A). The polypeptide is tRNA dimethylallyltransferase (Dechloromonas aromatica (strain RCB)).